Consider the following 249-residue polypeptide: Carbohydrate deacetylase (249 aa).

The Mg(2+) site is built by His-60 and His-125.

It belongs to the YdjC deacetylase family. In terms of assembly, homodimer. Requires Mg(2+) as cofactor.

In terms of biological role, probably catalyzes the deacetylation of acetylated carbohydrates an important step in the degradation of oligosaccharides. In Thermoanaerobacter pseudethanolicus (strain ATCC 33223 / 39E) (Clostridium thermohydrosulfuricum), this protein is Carbohydrate deacetylase.